A 506-amino-acid polypeptide reads, in one-letter code: Ribose import ATP-binding protein RbsA 2 (506 aa).

ABC transporter domains lie at 7 to 242 and 250 to 497; these read LEMR…VGRP and ERDI…TGVN. 39–46 is a binding site for ATP; it reads GENGAGKS.

The protein belongs to the ABC transporter superfamily. Ribose importer (TC 3.A.1.2.1) family. As to quaternary structure, the complex is composed of an ATP-binding protein (RbsA), two transmembrane proteins (RbsC) and a solute-binding protein (RbsB).

The protein resides in the cell inner membrane. It catalyses the reaction D-ribose(out) + ATP + H2O = D-ribose(in) + ADP + phosphate + H(+). Part of the ABC transporter complex RbsABC involved in ribose import. Responsible for energy coupling to the transport system. The polypeptide is Ribose import ATP-binding protein RbsA 2 (Escherichia coli O157:H7).